Here is a 57-residue protein sequence, read N- to C-terminus: Small hydrophobic protein (57 aa).

Topologically, residues 1 to 8 (MPAIQPLL) are virion surface. The chain crosses the membrane as a helical span at residues 9 to 29 (YLTFLLLILLYLIITLYVWVV). The Intravirion segment spans residues 30–57 (STITYKTAVRHAALYQRSLFRWSLDHSL).

The protein belongs to the rubulavirus small hydrophobic protein family. In terms of assembly, interacts with host TNFRSF1A, RIPK1 and IRAK1; these interactions interfere with host NF-kappa-B activation at the level of receptor complexes. Interacts with host protein UBQLN4.

The protein localises to the virion membrane. It localises to the host cell membrane. Its function is as follows. Plays a role in the inhibition of the host NF-kappa-B pathway. This inhibition occurs at the receptor level, by preventing the signaling of TNFR1 as well as IL-1R and TLR3. This chain is Small hydrophobic protein (SH), found in Homo sapiens (Human).